Reading from the N-terminus, the 421-residue chain is Tyrosine--tRNA ligase 1 (421 aa).

Y35 lines the L-tyrosine pocket. The 'HIGH' region signature appears at 40–49 (PTADSLHIGH). L-tyrosine is bound by residues Y170 and Q174. A 'KMSKS' region motif is present at residues 231-235 (KFGKT). K234 is a binding site for ATP. Residues 354 to 420 (LPLVEILVQS…GKKKYFLLTY (67 aa)) enclose the S4 RNA-binding domain.

It belongs to the class-I aminoacyl-tRNA synthetase family. TyrS type 1 subfamily. Homodimer.

It localises to the cytoplasm. It catalyses the reaction tRNA(Tyr) + L-tyrosine + ATP = L-tyrosyl-tRNA(Tyr) + AMP + diphosphate + H(+). Its function is as follows. Catalyzes the attachment of tyrosine to tRNA(Tyr) in a two-step reaction: tyrosine is first activated by ATP to form Tyr-AMP and then transferred to the acceptor end of tRNA(Tyr). This is Tyrosine--tRNA ligase 1 from Bacillus licheniformis (strain ATCC 14580 / DSM 13 / JCM 2505 / CCUG 7422 / NBRC 12200 / NCIMB 9375 / NCTC 10341 / NRRL NRS-1264 / Gibson 46).